We begin with the raw amino-acid sequence, 39 residues long: Photosystem II reaction center protein Y (39 aa).

A helical membrane pass occupies residues 4 to 24 (RVIVVVSPLLIAATWAAINIG).

It belongs to the PsbY family. PSII is composed of 1 copy each of membrane proteins PsbA, PsbB, PsbC, PsbD, PsbE, PsbF, PsbH, PsbI, PsbJ, PsbK, PsbL, PsbM, PsbT, PsbX, PsbY, PsbZ, Psb30/Ycf12, peripheral proteins PsbO, CyanoQ (PsbQ), PsbU, PsbV and a large number of cofactors. It forms dimeric complexes.

It localises to the cellular thylakoid membrane. Loosely associated component of the core of photosystem II (PSII), it is not always seen in crystals. PSII is a light-driven water plastoquinone oxidoreductase, using light energy to abstract electrons from H(2)O, generating a proton gradient subsequently used for ATP formation. In Synechocystis sp. (strain ATCC 27184 / PCC 6803 / Kazusa), this protein is Photosystem II reaction center protein Y.